Consider the following 544-residue polypeptide: Lysophosphatidylcholine acyltransferase 2 (544 aa).

The Cytoplasmic segment spans residues 1–58 (MNRCAEAAAVAATVPGSGVGDAGLRPPMVPRQASFFPPPVPNPFVQQTTISASRRLQM). A helical; Signal-anchor for type II membrane protein membrane pass occupies residues 59–79 (FLLGIILLPVRALLVGIILLL). The Lumenal portion of the chain corresponds to 80-544 (AWPFAVISTA…EEGTSDKKVD (465 aa)). The short motif at 146-151 (HSTFFD) is the HXXXXD motif element. The EGTC motif motif lies at 220 to 223 (EGTC). 2 consecutive EF-hand domains span residues 391 to 426 (PVSD…LCNP) and 428 to 463 (NTEE…SLGV). Ca(2+)-binding residues include Asp404, Asn406, Asp408, Ser410, Glu415, Asp441, Asp443, Asp445, Tyr447, and Glu452. A compositionally biased stretch (polar residues) spans 520 to 532 (TAPSVASNKVSPE). Positions 520-544 (TAPSVASNKVSPESQEEGTSDKKVD) are disordered.

The protein belongs to the 1-acyl-sn-glycerol-3-phosphate acyltransferase family. As to expression, highest expression is found in resident macrophages and casein-induced neutrophils followed by skin, colon, spleen and thioglycollate-induced macrophages. Detected in erythroleukemic cells but not in reticulocytes.

The protein resides in the endoplasmic reticulum membrane. The protein localises to the golgi apparatus membrane. Its subcellular location is the cell membrane. It is found in the lipid droplet. The catalysed reaction is a 1-acyl-sn-glycero-3-phosphocholine + an acyl-CoA = a 1,2-diacyl-sn-glycero-3-phosphocholine + CoA. It catalyses the reaction a 1-O-alkyl-sn-glycero-3-phosphocholine + acetyl-CoA = a 1-O-alkyl-2-acetyl-sn-glycero-3-phosphocholine + CoA. The enzyme catalyses a 1-acyl-sn-glycero-3-phosphate + an acyl-CoA = a 1,2-diacyl-sn-glycero-3-phosphate + CoA. It carries out the reaction a 1-O-(1Z-alkenyl)-sn-glycero-3-phosphocholine + an acyl-CoA = a 1-O-(1Z-alkenyl)-2-acyl-sn-glycero-3-phosphocholine + CoA. The catalysed reaction is 1-O-octadecyl-sn-glycero-3-phosphocholine + acetyl-CoA = 1-O-octadecyl-2-acetyl-sn-glycero-3-phosphocholine + CoA. It catalyses the reaction 1-hexadecanoyl-sn-glycero-3-phosphocholine + acetyl-CoA = 1-hexadecanoyl-2-acetyl-sn-glycero-3-phosphocholine + CoA. The enzyme catalyses 1-octadecanoyl-sn-glycero-3-phosphocholine + acetyl-CoA = 1-octadecanoyl-2-acetyl-sn-glycero-3-phosphocholine + CoA. It carries out the reaction a 1-O-(1Z-alkenyl)-sn-glycero-3-phosphocholine + acetyl-CoA = 1-O-(1Z)-alkenyl-2-acetyl-sn-glycero-3-phosphocholine + CoA. The catalysed reaction is 1-O-hexadecyl-sn-glycero-3-phosphocholine + acetyl-CoA = 1-O-hexadecyl-2-acetyl-sn-glycero-3-phosphocholine + CoA. It catalyses the reaction 1-O-octadecyl-sn-glycero-3-phosphocholine + (5Z,8Z,11Z,14Z)-eicosatetraenoyl-CoA = 1-O-octadecyl-2-(5Z,8Z,11Z,14Z)-eicosatetraenoyl-sn-glycero-3-phosphocholine + CoA. The enzyme catalyses 1-hexadecanoyl-sn-glycero-3-phosphate + (9Z)-octadecenoyl-CoA = 1-hexadecanoyl-2-(9Z-octadecenoyl)-sn-glycero-3-phosphate + CoA. It carries out the reaction 1-(9Z-octadecenoyl)-sn-glycero-3-phosphate + (9Z)-octadecenoyl-CoA = 1,2-di-(9Z-octadecenoyl)-sn-glycero-3-phosphate + CoA. The catalysed reaction is 1-(9Z-octadecenoyl)-sn-glycero-3-phosphate + hexadecanoyl-CoA = 1-(9Z)-octadecenoyl-2-hexadecanoyl-sn-glycero-3-phosphate + CoA. It catalyses the reaction 1-heptadecanoyl-sn-glycero-3-phosphate + (9Z)-octadecenoyl-CoA = 1-heptadecanoyl-2-(9Z)-octadecenoyl-sn-glycero-3-phosphate + CoA. The enzyme catalyses 1-octadecanoyl-sn-glycero-3-phosphate + (9Z)-octadecenoyl-CoA = 1-octadecanoyl-2-(9Z-octadecenoyl)-sn-glycero-3-phosphate + CoA. It carries out the reaction heptadecanoyl-CoA + 1-(9Z-octadecenoyl)-sn-glycero-3-phosphate = 1-(9Z)-octadecenoyl-2-heptadecanoyl-sn-glycero-3-phosphate + CoA. The catalysed reaction is 1-(9Z-octadecenoyl)-sn-glycero-3-phosphate + (9Z,12Z)-octadecadienoyl-CoA = 1-(9Z)-octadecenoyl-2-(9Z,12Z)-octadecadienoyl-sn-glycero-3-phosphate + CoA. It catalyses the reaction 1-(9Z-octadecenoyl)-sn-glycero-3-phosphate + tetradecanoyl-CoA = 1-(9Z)-octadecenoyl-2-tetradecanoyl-sn-glycero-3-phosphate + CoA. The enzyme catalyses pentadecanoyl-CoA + 1-(9Z-octadecenoyl)-sn-glycero-3-phosphate = 1-(9Z)-octadecenoyl-2-pentadecanoyl-sn-glycero-3-phosphate + CoA. It carries out the reaction nonadecanoyl-CoA + 1-(9Z-octadecenoyl)-sn-glycero-3-phosphate = 1-(9Z)-octadecenoyl-2-nonadecanoyl-sn-glycero-3-phosphate + CoA. The catalysed reaction is 1-hexadecanoyl-sn-glycero-3-phosphocholine + (9Z)-octadecenoyl-CoA = 1-hexadecanoyl-2-(9Z-octadecenoyl)-sn-glycero-3-phosphocholine + CoA. It functions in the pathway lipid metabolism; phospholipid metabolism. With respect to regulation, acetyltransferase activity is increased following acute inflammatory stimulation by lipopolysaccharide (LPS). Acyltransferase activity is unchanged. Exhibits both acyltransferase and acetyltransferase activities. Activity is calcium-dependent. Catalyzes the conversion of lysophosphatidylcholine (1-acyl-sn-glycero-3-phosphocholine or LPC) into phosphatidylcholine (1,2-diacyl-sn-glycero-3-phosphocholine or PC). Catalyzes the conversion 1-acyl-sn-glycerol-3-phosphate (lysophosphatidic acid or LPA) into 1,2-diacyl-sn-glycerol-3-phosphate (phosphatidic acid or PA) by incorporating an acyl moiety at the sn-2 position of the glycerol backbone. Involved in platelet-activating factor (PAF) biosynthesis by catalyzing the conversion of the PAF precursor, 1-O-alkyl-sn-glycero-3-phosphocholine (lyso-PAF) into 1-O-alkyl-2-acetyl-sn-glycero-3-phosphocholine (PAF). Also converts lyso-PAF to 1-O-alkyl-2-acyl-sn-glycero-3-phosphocholine (PC), a major component of cell membranes and a PAF precursor. Under resting conditions, acyltransferase activity is preferred. Upon acute inflammatory stimulus, acetyltransferase activity is enhanced and PAF synthesis increases. Involved in the regulation of lipid droplet number and size. In Mus musculus (Mouse), this protein is Lysophosphatidylcholine acyltransferase 2 (Lpcat2).